The primary structure comprises 63 residues: 2-hydroxymuconate tautomerase (63 aa).

The active-site Proton acceptor; via imino nitrogen is the P2.

The protein belongs to the 4-oxalocrotonate tautomerase family. In terms of assembly, homohexamer.

The catalysed reaction is (2Z,4E)-2-hydroxyhexa-2,4-dienedioate = (3E)-2-oxohex-3-enedioate. The protein operates within aromatic compound metabolism; salicylate degradation. In terms of biological role, catalyzes the ketonization of 2-hydroxymuconate stereoselectively to yield 2-oxo-3-hexenedioate. This is 2-hydroxymuconate tautomerase (tdnL) from Pseudomonas putida (Arthrobacter siderocapsulatus).